The chain runs to 91 residues: Uteroglobin (91 aa).

The signal sequence occupies residues 1-21; it reads MKLTIAIVLVTLTLFCRPAST.

It belongs to the secretoglobin family. In terms of assembly, antiparallel homodimer; disulfide-linked. Interaction with LMBR1L is controversial.

The protein localises to the secreted. Functionally, binds phosphatidylcholine, phosphatidylinositol, polychlorinated biphenyls (PCB) and weakly progesterone, potent inhibitor of phospholipase A2. This is Uteroglobin (SCGB1A1) from Bos taurus (Bovine).